A 330-amino-acid chain; its full sequence is Succinoglycan biosynthesis protein ExoA (330 aa).

3 consecutive transmembrane segments (helical) span residues 116–136 (ALAT…FSTF), 260–280 (IAFG…VGVW), and 299–319 (YGPL…AGFW).

It belongs to the glycosyltransferase 2 family.

It is found in the cell membrane. The protein operates within glycan metabolism; exopolysaccharide biosynthesis. Functionally, glycosyltransferase required for the synthesis of succinoglycan (EPS I). Needed for the addition of the second sugar (glucose). Catalyzes the formation of a beta-1,3 linkage with the galactose lipid carrier. This chain is Succinoglycan biosynthesis protein ExoA (exoA), found in Rhizobium meliloti (strain 1021) (Ensifer meliloti).